Consider the following 404-residue polypeptide: Phosphopentomutase (404 aa).

D10, D303, H308, D344, H345, and H356 together coordinate Mn(2+).

The protein belongs to the phosphopentomutase family. Requires Mn(2+) as cofactor.

The protein localises to the cytoplasm. It catalyses the reaction 2-deoxy-alpha-D-ribose 1-phosphate = 2-deoxy-D-ribose 5-phosphate. The enzyme catalyses alpha-D-ribose 1-phosphate = D-ribose 5-phosphate. It participates in carbohydrate degradation; 2-deoxy-D-ribose 1-phosphate degradation; D-glyceraldehyde 3-phosphate and acetaldehyde from 2-deoxy-alpha-D-ribose 1-phosphate: step 1/2. Functionally, isomerase that catalyzes the conversion of deoxy-ribose 1-phosphate (dRib-1-P) and ribose 1-phosphate (Rib-1-P) to deoxy-ribose 5-phosphate (dRib-5-P) and ribose 5-phosphate (Rib-5-P), respectively. This Shewanella baltica (strain OS155 / ATCC BAA-1091) protein is Phosphopentomutase.